The following is a 425-amino-acid chain: Formyl-CoA:oxalate CoA-transferase (425 aa).

CoA is bound by residues 17 to 18 (QS), Arg-38, 72 to 75 (LDTK), 96 to 98 (NFG), Arg-104, and 136 to 139 (KVYE). Asp-168 functions as the Nucleophile in the catalytic mechanism. 247–249 (GGQ) contributes to the substrate binding site.

Belongs to the CoA-transferase III family. Frc subfamily. In terms of assembly, homodimer.

The enzyme catalyses formyl-CoA + oxalate = oxalyl-CoA + formate. The protein operates within metabolic intermediate degradation; oxalate degradation; CO(2) and formate from oxalate: step 1/2. Involved in the catabolism of oxalate and in the adapatation to low pH via the induction of the oxalate-dependent acid tolerance response (ATR). Catalyzes the transfer of the CoA moiety from formyl-CoA to oxalate. In Rhodopseudomonas palustris (strain ATCC BAA-98 / CGA009), this protein is Formyl-CoA:oxalate CoA-transferase.